Here is a 318-residue protein sequence, read N- to C-terminus: Ribose-phosphate pyrophosphokinase 2 (318 aa).

Mg(2+) is bound by residues Asp-132, His-134, His-143, and Asp-147.

The protein belongs to the ribose-phosphate pyrophosphokinase family.

Its subcellular location is the cytoplasm. It catalyses the reaction D-ribose 5-phosphate + ATP = 5-phospho-alpha-D-ribose 1-diphosphate + AMP + H(+). It functions in the pathway metabolic intermediate biosynthesis; 5-phospho-alpha-D-ribose 1-diphosphate biosynthesis; 5-phospho-alpha-D-ribose 1-diphosphate from D-ribose 5-phosphate (route I): step 1/1. In terms of biological role, 5-phosphoribose 1-diphosphate synthase involved in nucleotide, histidine, and tryptophan biosynthesis. Active in heteromultimeric complexes with other 5-phosphoribose 1-diphosphate synthases (PRS2, PRS3, PRS4 and PRS5). The polypeptide is Ribose-phosphate pyrophosphokinase 2 (PRS2) (Saccharomyces cerevisiae (strain ATCC 204508 / S288c) (Baker's yeast)).